A 546-amino-acid polypeptide reads, in one-letter code: Chaperonin GroEL (546 aa).

Residues 29–32, K50, 86–90, G412, 476–478, and D492 each bind ATP; these read TMGP, DGTTT, and NAA.

It belongs to the chaperonin (HSP60) family. In terms of assembly, forms a cylinder of 14 subunits composed of two heptameric rings stacked back-to-back. Interacts with the co-chaperonin GroES.

It is found in the cytoplasm. It carries out the reaction ATP + H2O + a folded polypeptide = ADP + phosphate + an unfolded polypeptide.. In terms of biological role, together with its co-chaperonin GroES, plays an essential role in assisting protein folding. The GroEL-GroES system forms a nano-cage that allows encapsulation of the non-native substrate proteins and provides a physical environment optimized to promote and accelerate protein folding. May play a protective role against the defense mechanisms generated by the infected macrophages. This Legionella micdadei (Tatlockia micdadei) protein is Chaperonin GroEL.